The sequence spans 263 residues: Acetylglutamate kinase (263 aa).

Substrate is bound by residues 48–49, arginine 70, and asparagine 162; that span reads GG.

It belongs to the acetylglutamate kinase family. ArgB subfamily.

The protein resides in the cytoplasm. The catalysed reaction is N-acetyl-L-glutamate + ATP = N-acetyl-L-glutamyl 5-phosphate + ADP. The protein operates within amino-acid biosynthesis; L-arginine biosynthesis; N(2)-acetyl-L-ornithine from L-glutamate: step 2/4. Catalyzes the ATP-dependent phosphorylation of N-acetyl-L-glutamate. The protein is Acetylglutamate kinase of Shewanella sediminis (strain HAW-EB3).